The chain runs to 419 residues: CCA-adding enzyme (419 aa).

Positions 8 and 11 each coordinate ATP. The CTP site is built by glycine 8 and arginine 11. Mg(2+) is bound by residues aspartate 21 and aspartate 23. Arginine 91, arginine 137, and arginine 140 together coordinate ATP. CTP is bound by residues arginine 91, arginine 137, and arginine 140.

It belongs to the tRNA nucleotidyltransferase/poly(A) polymerase family. Bacterial CCA-adding enzyme type 2 subfamily. It depends on Mg(2+) as a cofactor.

It catalyses the reaction a tRNA precursor + 2 CTP + ATP = a tRNA with a 3' CCA end + 3 diphosphate. The catalysed reaction is a tRNA with a 3' CCA end + 2 CTP + ATP = a tRNA with a 3' CCACCA end + 3 diphosphate. Catalyzes the addition and repair of the essential 3'-terminal CCA sequence in tRNAs without using a nucleic acid template. Adds these three nucleotides in the order of C, C, and A to the tRNA nucleotide-73, using CTP and ATP as substrates and producing inorganic pyrophosphate. tRNA 3'-terminal CCA addition is required both for tRNA processing and repair. Also involved in tRNA surveillance by mediating tandem CCA addition to generate a CCACCA at the 3' terminus of unstable tRNAs. While stable tRNAs receive only 3'-terminal CCA, unstable tRNAs are marked with CCACCA and rapidly degraded. This chain is CCA-adding enzyme, found in Buchnera aphidicola subsp. Baizongia pistaciae (strain Bp).